A 361-amino-acid chain; its full sequence is Core-capsid bridging protein (361 aa).

Positions 311 to 321 (RRRRVARRSKS) are enriched in basic residues. The tract at residues 311 to 331 (RRRRVARRSKSTGRFVAAPRK) is disordered.

It belongs to the adenoviridae core-capsid bridging protein family. Monomer. Homodimer. Exists in equilibrium between monomers and dimers in solution. Interacts with the histone-like nucleoprotein; this interactions bridge the virus core to the capsid. Interacts with core protein X; this interactions bridge the virus core to the capsid. Interacts with the endosome lysis protein VI; this interactions bridge the virus core to the capsid. Interacts with the peripentonal hexons. Interacts with host NPM1; this interaction might play a role in virus assembly.

It localises to the virion. The protein resides in the host nucleus. The protein localises to the host nucleolus. Its function is as follows. Associates loosely with the viral DNA to form an outer shell around the nucleoprotein-DNA complex and links it with the capsid by binding the endosome lysis protein. Dissociates from the viral genome during entry. Might be involved in nuclear capsid assembly of the viral particles through its association with NPM1/nucleophosmin. This Bovine adenovirus 2 (BAdV-2) protein is Core-capsid bridging protein.